Reading from the N-terminus, the 98-residue chain is NADH-ubiquinone oxidoreductase chain 4L (98 aa).

3 helical membrane-spanning segments follow: residues 1–21 (MPVV…GLLI), 29–49 (SLLC…VTVL), and 61–81 (IILL…LVMV).

The protein belongs to the complex I subunit 4L family. Core subunit of respiratory chain NADH dehydrogenase (Complex I) which is composed of 45 different subunits.

It is found in the mitochondrion inner membrane. It carries out the reaction a ubiquinone + NADH + 5 H(+)(in) = a ubiquinol + NAD(+) + 4 H(+)(out). Its function is as follows. Core subunit of the mitochondrial membrane respiratory chain NADH dehydrogenase (Complex I) which catalyzes electron transfer from NADH through the respiratory chain, using ubiquinone as an electron acceptor. Part of the enzyme membrane arm which is embedded in the lipid bilayer and involved in proton translocation. This is NADH-ubiquinone oxidoreductase chain 4L (MT-ND4L) from Ursus maritimus (Polar bear).